Here is a 696-residue protein sequence, read N- to C-terminus: Translation factor waclaw, mitochondrial (696 aa).

The N-terminal 76 residues, methionine 1–lysine 76, are a transit peptide targeting the mitochondrion. Residues glutamate 97–glutamine 278 enclose the tr-type G domain. GTP contacts are provided by residues alanine 106 to serine 113, aspartate 171 to histidine 175, and asparagine 225 to aspartate 228.

It belongs to the TRAFAC class translation factor GTPase superfamily. Classic translation factor GTPase family. LepA subfamily.

Its subcellular location is the mitochondrion inner membrane. It catalyses the reaction GTP + H2O = GDP + phosphate + H(+). In terms of biological role, promotes mitochondrial protein synthesis. May act as a fidelity factor of the translation reaction, by catalyzing a one-codon backward translocation of tRNAs on improperly translocated ribosomes. Binds to mitochondrial ribosomes in a GTP-dependent manner. The protein is Translation factor waclaw, mitochondrial of Drosophila melanogaster (Fruit fly).